The chain runs to 143 residues: MAGFLMKQMVGNQLSEVTGGLGMKDDGGEKTETGEDPEVIAARLEQEERRKEKHRKMENEREKMRQGIRDKYAIKKKEEGVAMDFTEGRIGGPRKTPEEIAAEMNAEDDSLIGQLGLTEQVEKAKTMATGAFETVKGFFPFGK.

A disordered region spans residues 16–72 (EVTGGLGMKDDGGEKTETGEDPEVIAARLEQEERRKEKHRKMENEREKMRQGIRDKY). 2 stretches are compositionally biased toward basic and acidic residues: residues 23 to 33 (MKDDGGEKTET) and 44 to 72 (LEQEERRKEKHRKMENEREKMRQGIRDKY). A coiled-coil region spans residues 40-71 (IAARLEQEERRKEKHRKMENEREKMRQGIRDK).

It belongs to the complexin/synaphin family.

It is found in the cytoplasm. It localises to the cytosol. Its function is as follows. Positively regulates a late step in synaptic vesicle exocytosis. The sequence is that of Putative complexin-1 (cpx-1) from Caenorhabditis elegans.